The following is a 349-amino-acid chain: MSGWHHRHILDLASFSRDDFASILELAQRFRSLPVTGVRKLPALQGRLVATLFFEPSTRTRSSFELAAKRLSADVMSFSPSSSSLSKGESVLDTARTYVAMGADVLVVRHRSTSVPQQLAADLDQLGERTVVLNGGDGLHSHPSQGLLDLLTLARYFDAQKPTPQALDGKKIVIVGDILHSRVARSNLWALTGCGADVVLCGPTSLLPEEFAAFVDAPPPGLSCDPVAQRGKVTVERRLEQALPGADAVMTLRLQKERMTQQLLTSLERYHRDYGLSHARLQLCGRQVPVLHPGPVNRGVEMTSQLLDDPTICLVEEQVRNGVPVRMALLYLMAAAESAAESSLVSISS.

The carbamoyl phosphate site is built by Arg-59 and Thr-60. Lys-87 contacts L-aspartate. 3 residues coordinate carbamoyl phosphate: Arg-109, His-142, and Gln-145. Arg-182 and Arg-253 together coordinate L-aspartate. The carbamoyl phosphate site is built by Gly-294 and Pro-295.

It belongs to the aspartate/ornithine carbamoyltransferase superfamily. ATCase family. As to quaternary structure, heterododecamer (2C3:3R2) of six catalytic PyrB chains organized as two trimers (C3), and six regulatory PyrI chains organized as three dimers (R2).

It catalyses the reaction carbamoyl phosphate + L-aspartate = N-carbamoyl-L-aspartate + phosphate + H(+). It functions in the pathway pyrimidine metabolism; UMP biosynthesis via de novo pathway; (S)-dihydroorotate from bicarbonate: step 2/3. In terms of biological role, catalyzes the condensation of carbamoyl phosphate and aspartate to form carbamoyl aspartate and inorganic phosphate, the committed step in the de novo pyrimidine nucleotide biosynthesis pathway. In Synechococcus sp. (strain CC9902), this protein is Aspartate carbamoyltransferase catalytic subunit.